A 229-amino-acid chain; its full sequence is 7-cyano-7-deazaguanine synthase (229 aa).

9-19 (YSGGLDSTTCM) provides a ligand contact to ATP. 4 residues coordinate Zn(2+): cysteine 189, cysteine 199, cysteine 202, and cysteine 205.

It belongs to the QueC family. Requires Zn(2+) as cofactor.

It catalyses the reaction 7-carboxy-7-deazaguanine + NH4(+) + ATP = 7-cyano-7-deazaguanine + ADP + phosphate + H2O + H(+). It functions in the pathway purine metabolism; 7-cyano-7-deazaguanine biosynthesis. Functionally, catalyzes the ATP-dependent conversion of 7-carboxy-7-deazaguanine (CDG) to 7-cyano-7-deazaguanine (preQ(0)). The polypeptide is 7-cyano-7-deazaguanine synthase (Geotalea daltonii (strain DSM 22248 / JCM 15807 / FRC-32) (Geobacter daltonii)).